A 230-amino-acid chain; its full sequence is ATP-dependent dethiobiotin synthetase BioD (230 aa).

ATP is bound at residue 12–17 (DVGKTV). Position 16 (Thr16) interacts with Mg(2+). Lys37 is a catalytic residue. Thr41 lines the substrate pocket. ATP-binding positions include Asp49, 108–111 (EGAG), 168–169 (GS), and 198–200 (PEG). Mg(2+)-binding residues include Asp49 and Glu108.

Belongs to the dethiobiotin synthetase family. As to quaternary structure, homodimer. Requires Mg(2+) as cofactor.

Its subcellular location is the cytoplasm. The catalysed reaction is (7R,8S)-7,8-diammoniononanoate + CO2 + ATP = (4R,5S)-dethiobiotin + ADP + phosphate + 3 H(+). It functions in the pathway cofactor biosynthesis; biotin biosynthesis; biotin from 7,8-diaminononanoate: step 1/2. In terms of biological role, catalyzes a mechanistically unusual reaction, the ATP-dependent insertion of CO2 between the N7 and N8 nitrogen atoms of 7,8-diaminopelargonic acid (DAPA, also called 7,8-diammoniononanoate) to form a ureido ring. The chain is ATP-dependent dethiobiotin synthetase BioD from Corynebacterium kroppenstedtii (strain DSM 44385 / JCM 11950 / CIP 105744 / CCUG 35717).